A 512-amino-acid polypeptide reads, in one-letter code: Tabersonine 16-hydroxylase 2 (512 aa).

Met-1 is a topological domain (lumenal). Residues 2 to 22 (ELYYFSTFAFLLFCFILAKTL) traverse the membrane as a helical segment. The Cytoplasmic portion of the chain corresponds to 23–512 (KKSGQSNLKL…YSASSLKGKY (490 aa)). Position 445 (Cys-445) interacts with heme.

Belongs to the cytochrome P450 family. Heme is required as a cofactor. Expressed at low levels in roots, fruits, stems, flower buds and flowers, but highly expressed in young leaves. Detected in adaxial and abaxial epidermis cells.

It localises to the endoplasmic reticulum membrane. The catalysed reaction is (-)-tabersonine + reduced [NADPH--hemoprotein reductase] + O2 = 16-hydroxytabersonine + oxidized [NADPH--hemoprotein reductase] + H2O + H(+). In terms of biological role, involved in the foliar biosynthesis of vindoline, a precursor of vinblastine and vincristine. Hydroxylates specifically tabersonine, 2,3-dihydrotabersonine and 2,3-dihydro-3-hydroxytabersonine, but has no activity with naringenin, tryptamine, secologanin, strictosidine, ajmalicine, vindoline and catharanthine. The polypeptide is Tabersonine 16-hydroxylase 2 (Catharanthus roseus (Madagascar periwinkle)).